We begin with the raw amino-acid sequence, 207 residues long: Protein GrpE (207 aa).

Positions 1-11 (MTETDGQKDNN) are enriched in basic and acidic residues. The segment at 1-39 (MTETDGQKDNNQDTAQAAADPVVSKPYIMPDDPEEGSNE) is disordered.

This sequence belongs to the GrpE family. In terms of assembly, homodimer.

The protein localises to the cytoplasm. Participates actively in the response to hyperosmotic and heat shock by preventing the aggregation of stress-denatured proteins, in association with DnaK and GrpE. It is the nucleotide exchange factor for DnaK and may function as a thermosensor. Unfolded proteins bind initially to DnaJ; upon interaction with the DnaJ-bound protein, DnaK hydrolyzes its bound ATP, resulting in the formation of a stable complex. GrpE releases ADP from DnaK; ATP binding to DnaK triggers the release of the substrate protein, thus completing the reaction cycle. Several rounds of ATP-dependent interactions between DnaJ, DnaK and GrpE are required for fully efficient folding. The protein is Protein GrpE of Rhodopseudomonas palustris (strain TIE-1).